An 827-amino-acid polypeptide reads, in one-letter code: MWFWSRDPARDFPYDVTGEREELPAGWGVQKGKKKTGGDAVSVFTYEIRPGAEEQTQAAKTALKRIKTLKHPNILSYVDGLETDKCLYIVTEPVTPLGTYVKLRTDSGGVSELEISWGLHQIVKALSFLVNDGNLIHNNVCMSAVFVDRAGEWKLGGLDYMYTAGAEDTAPLKGIEMEKYNPPEKTDRSKTSKEKWSADMWCLGCLIWEVFNGPLPRPTALRSLGKIPKSLVPHYCELVGANPKVRPNPARFLQNCRSPGGFFCNSFVETNLFLEEIQIKDPAEKQTFFEQLSENLDSFPEDFCRHKILPQLLTAFEFGSAGAVVLPPLFKIGKFLNADEYQQKIIPVVVKMFSSTDRAMRIRLLQQMENFIQYLNEPTVNAQIFPHVVHGFMDTNPAIREQTVKSMLLLAPKLNENNLNMELMKHFARLQARDDQGPIRCNTTVCLGKIAPYLNPATRQRVLISAFSRATKDPFSPSRAAGVLGFAATHNFYSLTDCAGKVLPVLCGVTVDPEKNVREQAFKAIRSFLDKLETVSEDPSQLAELEKDVHTASVSPSVVGGWAGWAVTGVSSLTSKFIRTGGGAQDAAASEGASAPSTASEASKPDTAPSSSAPPAAASTAPTSYEPEEEKGAPDNSLDRWDDEDWGSLEDAEQNRGQTENDDWDTDWGHGKTQEKTVDFSSSRSKTKQVSPPPNRTSALDDGWGWDDAFQTVPPSKEHTASKSQQLEGTRPASDYNWDTSGSSGRQGDFFASLSEPSSQKNDNRNSDSAGDWGGDDNWESVEADQGLSKAEMARKKREERQKEIEAKRAERRAAKGPLKLGVRKLD.

The Protein kinase domain occupies 1 to 309 (MWFWSRDPAR…PEDFCRHKIL (309 aa)). HEAT repeat units lie at residues 345 to 383 (IIPV…VNAQ), 384 to 422 (IFPH…LNME), and 502 to 540 (VLPV…EDPS). Positions 586 to 624 (DAAASEGASAPSTASEASKPDTAPSSSAPPAAASTAPTS) are enriched in low complexity. The disordered stretch occupies residues 586–827 (DAAASEGASA…PLKLGVRKLD (242 aa)). Basic and acidic residues predominate over residues 630-640 (EKGAPDNSLDR). Residues 641–652 (WDDEDWGSLEDA) are compositionally biased toward acidic residues. Basic and acidic residues predominate over residues 667 to 678 (DWGHGKTQEKTV). 2 stretches are compositionally biased toward polar residues: residues 679-690 (DFSSSRSKTKQV) and 737-746 (NWDTSGSSGR). Residues 774 to 783 (GGDDNWESVE) show a composition bias toward acidic residues. A coiled-coil region spans residues 788-817 (LSKAEMARKKREERQKEIEAKRAERRAAKG). Over residues 792–814 (EMARKKREERQKEIEAKRAERRA) the composition is skewed to basic and acidic residues.

This sequence belongs to the protein kinase superfamily.

Functionally, regulates COPI-mediated retrograde protein traffic at the interface between the Golgi apparatus and the endoplasmic reticulum. Involved in the maintenance of the Golgi apparatus morphology. The protein is N-terminal kinase-like protein (scyl1) of Xenopus tropicalis (Western clawed frog).